Reading from the N-terminus, the 589-residue chain is Protein drl-1 (589 aa).

Positions M1–T51 are disordered. The segment covering I20–D41 has biased composition (acidic residues). One can recognise a Protein kinase domain in the interval W97–K373. Helical transmembrane passes span G429–V449, L456–I476, and G491–C511.

The protein belongs to the protein kinase superfamily. STE Ser/Thr protein kinase family. In terms of tissue distribution, expressed in vulval and body wall muscles, hypodermis, seam cells and tissues next to pharynx and anus.

The protein resides in the membrane. Its function is as follows. Negatively regulates lifespan and health span probably by participating in nutrient sensing. This is Protein drl-1 from Caenorhabditis elegans.